A 406-amino-acid polypeptide reads, in one-letter code: Pyruvate dehydrogenase E1 component subunit beta-2, chloroplastic (406 aa).

Residues 1-44 constitute a chloroplast transit peptide; that stretch reads MSSIIHGAGAATTTLSTFNSVDSKKLFVAPSRTNLSVRSQRYIV. Glu-142 serves as a coordination point for thiamine diphosphate. Residues Val-195, Ala-243, Ile-244, and Asn-248 each contribute to the K(+) site.

As to quaternary structure, tetramer of 2 alpha and 2 beta subunits. Thiamine diphosphate is required as a cofactor.

It is found in the plastid. Its subcellular location is the chloroplast. It carries out the reaction N(6)-[(R)-lipoyl]-L-lysyl-[protein] + pyruvate + H(+) = N(6)-[(R)-S(8)-acetyldihydrolipoyl]-L-lysyl-[protein] + CO2. Its function is as follows. The pyruvate dehydrogenase complex catalyzes the overall conversion of pyruvate to acetyl-CoA and CO(2). It contains multiple copies of three enzymatic components: pyruvate dehydrogenase (E1), dihydrolipoamide acetyltransferase (E2) and lipoamide dehydrogenase (E3). This chain is Pyruvate dehydrogenase E1 component subunit beta-2, chloroplastic (PDH-E1 BETA), found in Arabidopsis thaliana (Mouse-ear cress).